A 242-amino-acid chain; its full sequence is Protein FsrB (242 aa).

Helical transmembrane passes span 29–49 (LTVY…SVLF), 52–72 (LSET…AGGW), 78–95 (WLCR…PFVL), 100–120 (VSLP…LFYW), and 160–180 (KIAS…LPVT).

This sequence belongs to the AgrB family.

Its subcellular location is the cell membrane. In terms of biological role, may be involved in the proteolytic processing of a quorum sensing system signal molecule precursor required for the regulation of the virulence genes for gelatinase (gelE) and a serine protease (sprE). This Enterococcus faecalis (strain ATCC 47077 / OG1RF) protein is Protein FsrB (fsrB).